Consider the following 261-residue polypeptide: Cytochrome c oxidase subunit 3 (261 aa).

Topologically, residues 1 to 15 (MTHQTHAYHMVNPSP) are mitochondrial matrix. The helical transmembrane segment at 16–34 (WPLTGALSALLMTSGLIMW) threads the bilayer. Residues 35-40 (FHFNST) are Mitochondrial intermembrane-facing. Residues 41-66 (TLLMLGLTTNMLTMYQWWRDVIREST) form a helical membrane-spanning segment. Residues 67–72 (FQGHHT) are Mitochondrial matrix-facing. A helical transmembrane segment spans residues 73–105 (PNVQKGLRYGMILFIISEVLFFTGFFWAFYHSS). At 106–128 (LAPTPELGGCWPPTGINPLNPLE) the chain is on the mitochondrial intermembrane side. A helical membrane pass occupies residues 129–152 (VPLLNTSVLLASGVSITWAHHSLM). The Mitochondrial matrix portion of the chain corresponds to 153–155 (EGN). A helical membrane pass occupies residues 156 to 183 (RNHMLQALFITIALGVYFTLLQASEYYE). The Mitochondrial intermembrane portion of the chain corresponds to 184 to 190 (APFTISD). The chain crosses the membrane as a helical span at residues 191 to 223 (GVYGSTFFVATGFHGLHVIIGSTFLIVCFFRQL). Residues 224–232 (KFHFTSNHH) are Mitochondrial matrix-facing. A helical membrane pass occupies residues 233–256 (FGFEAAAWYWHFVDVVWLFLYVSI). Over 257–261 (YWWGS) the chain is Mitochondrial intermembrane.

This sequence belongs to the cytochrome c oxidase subunit 3 family. Component of the cytochrome c oxidase (complex IV, CIV), a multisubunit enzyme composed of 14 subunits. The complex is composed of a catalytic core of 3 subunits MT-CO1, MT-CO2 and MT-CO3, encoded in the mitochondrial DNA, and 11 supernumerary subunits COX4I, COX5A, COX5B, COX6A, COX6B, COX6C, COX7A, COX7B, COX7C, COX8 and NDUFA4, which are encoded in the nuclear genome. The complex exists as a monomer or a dimer and forms supercomplexes (SCs) in the inner mitochondrial membrane with NADH-ubiquinone oxidoreductase (complex I, CI) and ubiquinol-cytochrome c oxidoreductase (cytochrome b-c1 complex, complex III, CIII), resulting in different assemblies (supercomplex SCI(1)III(2)IV(1) and megacomplex MCI(2)III(2)IV(2)).

Its subcellular location is the mitochondrion inner membrane. It carries out the reaction 4 Fe(II)-[cytochrome c] + O2 + 8 H(+)(in) = 4 Fe(III)-[cytochrome c] + 2 H2O + 4 H(+)(out). Component of the cytochrome c oxidase, the last enzyme in the mitochondrial electron transport chain which drives oxidative phosphorylation. The respiratory chain contains 3 multisubunit complexes succinate dehydrogenase (complex II, CII), ubiquinol-cytochrome c oxidoreductase (cytochrome b-c1 complex, complex III, CIII) and cytochrome c oxidase (complex IV, CIV), that cooperate to transfer electrons derived from NADH and succinate to molecular oxygen, creating an electrochemical gradient over the inner membrane that drives transmembrane transport and the ATP synthase. Cytochrome c oxidase is the component of the respiratory chain that catalyzes the reduction of oxygen to water. Electrons originating from reduced cytochrome c in the intermembrane space (IMS) are transferred via the dinuclear copper A center (CU(A)) of subunit 2 and heme A of subunit 1 to the active site in subunit 1, a binuclear center (BNC) formed by heme A3 and copper B (CU(B)). The BNC reduces molecular oxygen to 2 water molecules using 4 electrons from cytochrome c in the IMS and 4 protons from the mitochondrial matrix. The protein is Cytochrome c oxidase subunit 3 (MT-CO3) of Gazella subgutturosa (Goitred gazelle).